We begin with the raw amino-acid sequence, 273 residues long: Ribosomal RNA small subunit methyltransferase A (273 aa).

Positions 18, 20, 45, 66, 91, and 113 each coordinate S-adenosyl-L-methionine.

It belongs to the class I-like SAM-binding methyltransferase superfamily. rRNA adenine N(6)-methyltransferase family. RsmA subfamily.

It localises to the cytoplasm. It catalyses the reaction adenosine(1518)/adenosine(1519) in 16S rRNA + 4 S-adenosyl-L-methionine = N(6)-dimethyladenosine(1518)/N(6)-dimethyladenosine(1519) in 16S rRNA + 4 S-adenosyl-L-homocysteine + 4 H(+). Functionally, specifically dimethylates two adjacent adenosines (A1518 and A1519) in the loop of a conserved hairpin near the 3'-end of 16S rRNA in the 30S particle. May play a critical role in biogenesis of 30S subunits. The polypeptide is Ribosomal RNA small subunit methyltransferase A (Salmonella schwarzengrund (strain CVM19633)).